The sequence spans 627 residues: Ski protein homolog (627 aa).

The segment covering Met1–Val12 has biased composition (polar residues). Disordered stretches follow at residues Met1–Met22, Leu34–Arg58, and Glu299–Pro318.

The protein belongs to the SKI family. May interact with daf-3. In terms of tissue distribution, expressed in ganglia in the head and tail and in the anterior pharynx.

It localises to the nucleus. Functionally, probable component of transcriptional regulatory complex with SMAD protein daf-3. Required to regulate entry into a developmentally arrested larval state known as dauer, in response to harsh environmental conditions. Involved in larvae undergoing cell-cycle arrest during the dauer stage. The sequence is that of Ski protein homolog from Caenorhabditis elegans.